Here is a 301-residue protein sequence, read N- to C-terminus: Probable alpha-L-glutamate ligase 2 (301 aa).

Residues 104–287 (LQLLSRKGIG…VAEPIVEYIE (184 aa)) enclose the ATP-grasp domain. ATP contacts are provided by residues Lys141, 178–179 (EY), Asp187, and 211–213 (RSN). Positions 248, 260, and 262 each coordinate Mg(2+). 3 residues coordinate Mn(2+): Asp248, Glu260, and Asn262.

This sequence belongs to the RimK family. Mg(2+) is required as a cofactor. Requires Mn(2+) as cofactor.

The polypeptide is Probable alpha-L-glutamate ligase 2 (Shewanella amazonensis (strain ATCC BAA-1098 / SB2B)).